Consider the following 38-residue polypeptide: Histatin-1 (38 aa).

Residues 1–38 (DSHEERHHGRHGHHKYGRKFHEKHHSHRGYRSNYLYDN) form a disordered region. Residue Ser-2 is modified to Phosphoserine. The span at 8–30 (HGRHGHHKYGRKFHEKHHSHRGY) shows a compositional bias: basic residues.

This sequence belongs to the histatin/statherin family.

Its subcellular location is the secreted. Histatins (Hsts) are cationic and histidine-rich secreted peptides mainly synthesized by saliva glands of humans and higher primates. Hsts are considered to be major precursors of the protective proteinaceous structure on tooth surfaces (enamel pellicle). The chain is Histatin-1 (HTN1) from Macaca fascicularis (Crab-eating macaque).